We begin with the raw amino-acid sequence, 583 residues long: Selenocysteine-specific elongation factor (583 aa).

One can recognise a tr-type G domain in the interval 5–203; that stretch reads RVNVNVGVLG…LLKSQISIPT (199 aa). A G1 region spans residues 14 to 21; it reads GHIDSGKT. GTP is bound by residues Gly19, Thr21, and Ala22. Thr21 contributes to the Mg(2+) binding site. The segment at 46–50 is G2; sequence GITLD. 2 residues coordinate Mg(2+): Thr48 and Asp78. A G3 region spans residues 78 to 81; it reads DCPG. The segment at 132–135 is G4; that stretch reads NKID. GTP is bound by residues Asp135 and Lys173. The tract at residues 171-173 is G5; sequence AAK. A disordered region spans residues 371–390; the sequence is MPTATEGDDEADPKAGHAPG. Ser524 carries the phosphoserine modification. Positions 528 to 562 are disordered; it reads KKILTPTLKKRSRAGRGETTKPEEGTERPEPIQPV. The residue at position 532 (Thr532) is a Phosphothreonine. The Nuclear localization signal signature appears at 534-540; it reads TLKKRSR. Residues 542 to 557 show a composition bias toward basic and acidic residues; that stretch reads GRGETTKPEEGTERPE. Arg543 is subject to Omega-N-methylarginine.

The protein belongs to the TRAFAC class translation factor GTPase superfamily. Classic translation factor GTPase family. SelB subfamily. Requires Mg(2+) as cofactor. Mn(2+) serves as cofactor.

It localises to the cytoplasm. Its subcellular location is the nucleus. The enzyme catalyses GTP + H2O = GDP + phosphate + H(+). Functionally, translation factor required for the incorporation of the rare amino acid selenocysteine encoded by UGA codons. Replaces the eRF1-eRF3-GTP ternary complex for the insertion of selenocysteine directed by the UGA codon. Insertion of selenocysteine at UGA codons is mediated by SECISBP2 and EEFSEC: SECISBP2 (1) specifically binds the SECIS sequence once the 80S ribosome encounters an in-frame UGA codon and (2) contacts the RPS27A/eS31 of the 40S ribosome before ribosome stalling. (3) GTP-bound EEFSEC then delivers selenocysteinyl-tRNA(Sec) to the 80S ribosome and adopts a preaccommodated state conformation. (4) After GTP hydrolysis, EEFSEC dissociates from the assembly, selenocysteinyl-tRNA(Sec) accommodates, and peptide bond synthesis and selenoprotein elongation occur. The sequence is that of Selenocysteine-specific elongation factor (Eefsec) from Mus musculus (Mouse).